Reading from the N-terminus, the 455-residue chain is Succinyl-CoA--L-malate CoA-transferase alpha subunit (455 aa).

Positions 1-58 (MAKASRLTRSTGQPTEVSEGQVTGTSEMPPTGEEPSGHAESKPPASDPMSTPGTGQEQ) are disordered. Composition is skewed to polar residues over residues 7-28 (LTRS…TSEM) and 48-58 (PMSTPGTGQEQ). The active-site Nucleophile is the D227.

It belongs to the CoA-transferase III family. As to quaternary structure, forms a large complex composed of six heterodimers (alpha, beta).

The catalysed reaction is succinyl-CoA + (S)-malate = (S)-malyl-CoA + succinate. It carries out the reaction (3S)-citramalate + succinyl-CoA = (3S)-citramalyl-CoA + succinate. Its function is as follows. Involved in the 3-hydroxypropionate cycle used for autotrophic carbon dioxide fixation. Catalyzes the transfer of CoA moiety from succinyl-CoA to L-malate to yield L-malyl-CoA. This Chloroflexus aurantiacus (strain ATCC 29366 / DSM 635 / J-10-fl) protein is Succinyl-CoA--L-malate CoA-transferase alpha subunit (smtA).